A 177-amino-acid chain; its full sequence is Bifunctional protein PyrR (177 aa).

Positions 99–111 match the PRPP-binding motif; that stretch reads VVLVDDVLFTGRT.

The protein belongs to the purine/pyrimidine phosphoribosyltransferase family. PyrR subfamily.

It catalyses the reaction UMP + diphosphate = 5-phospho-alpha-D-ribose 1-diphosphate + uracil. Its function is as follows. Regulates the transcription of the pyrimidine nucleotide (pyr) operon in response to exogenous pyrimidines. In terms of biological role, also displays a weak uracil phosphoribosyltransferase activity which is not physiologically significant. This is Bifunctional protein PyrR from Geobacter sp. (strain M21).